The sequence spans 114 residues: Kita-kyushu lung cancer antigen 1 homolog (114 aa).

Topologically, residues 1-4 (MNVY) are cytoplasmic. Residues 5–22 (LLLASGILCALMTVFWKY) form a helical; Signal-anchor for type II membrane protein membrane-spanning segment. At 23 to 114 (RRFQRNTGEM…RSASAHRKST (92 aa)) the chain is on the extracellular side. N-linked (GlcNAc...) asparagine glycosylation is present at asparagine 84.

It is found in the cell membrane. The polypeptide is Kita-kyushu lung cancer antigen 1 homolog (CT83) (Macaca fascicularis (Crab-eating macaque)).